The primary structure comprises 2073 residues: MHNGSESVLLFGDYTEPWIESIDSLCRQAVSEAWLQSFLDDTVTIIKEQKRSIERILQDSLGEFTDLKDLADRHRGRTDEISYVQGLMLFTVRAAYLLQWVKRDPSLLTASHAIGFSGGLANASVLAVAQDFDTLYTACLEGLRIFSRSCRLAIVRSRAIEEGSGSWGWLVVGISSNDLRHALDHFQNSLGIPNSKRSKVGLTGDRWNTVIGPPSTLELVFKQCPAIKSLPKEKLNIHALQHALDLSESDLDYIIGDSALAQSHVNPEFSLWGMAQPKEPWGSWGELLKVVIVKMLSEPLDIVGVVDEFSGRLGSVPQVNICNMAMEGPSSHAAYLLSTMKLSGKTVNFENGFGSEKAQSASSGRIAIVGMSGRGPGCEDLEEFWNVISNAQDQHQEIPKDRFNLEDYLKQGHVTHCQSESMAKHGCFITKPGEFDARFFHISPREALLMDPGHRMFLMSAYEALETAGYSNGHTKATDPQKISIFFAQCNDDWRIASHDVKGCDSYTLPGTARAFGPGRLAFHLGWEGPAYSMDSACASSVSSVHFACMSLKNKDTDMAVVGAANVIGYPHTFISLSQSGVLSRTGNCKPFRDDADGYCRADFSGAIVLKRLEDAIAANDNILGVLAGTGRNQAGNATSITTSDTATQTRLFHKVLRSANVSPEDISYVEMHGTGTPIGDPAEMGAIANVFGNRKGNTPLPLGAVKGNVGHSESSAGMASLLKCLMMLQKDAIPPQAGMPHALNPKFPSLSDINVVIPSKLGDFKKTLNMPRRILLNNFDAAGGNGCLLLEEYVPPTSKELNIDEQDPRSTHVVVLSAKTQASHHANKRNLLDWLKTNRSTRIQDIAYTSTARRVHWPLRYAIAASSTQELTTKLESSIARENSESTNGRKSPIVFTFTGQGSQYAGMGAELYSTCFAFRDTIKLCARICDDHQFPDFIDIITDKDIDISTKSPLQIQLALLALEIGLAAFWKSIGVLPDMVVGHSLGEYAALYVAGVLSLGDVFYVVGRRAMLLLDRCEIGSCSMLALNASVATVQAHLDTQPHLSCAVACINGPKATVVSGPLGEIADLQTLFHGNKIRSKLLPVPFAFHSLQMEPILDEFTILAGIATFMQPKIPVASTLLATVVDKEGIFGTQYLAEQTRQRVDFVGALNAVKSKMDDPIWLEVGPSPVCSGLVQATISPSTTKIMSTLDATGSDWSSIAHCLSGLYQNGVDIDWLGLHAPYEGGLTLQALPSYQWDLKDYWMPYVEPSGVDQTVIANTASGRGTMSSSISTCAQYVITETKTPKPQVNLGAPTADAGFKAFIDGHRLRGVPVCAGAVFIEAAETAARYLLKYLGRNDADTAVLSLQDMALIRPITQKSVQANAELQTTATLDSGSKDTVRITFGESLAAGSSQHLGGCLLSICEAGLESQWEKSSFFIRSRMNDIIANVKGGQGHRIQRDIYYALFADTVEYDNPFRGVKEAYVSQDFEEAAAEVILKADPTGTQFTTSPYWTDSLSQLCGFVVNGNPSRPKDITYMMASLGSYIQMGQIVPGKSYFTYSRISDRAQDLVYCDTFVFDNDRLVAQSTNCVFHRVQNVILERLLGKPASSSVPAQASDPLRSKRSPQEARSLPGEAKTEKPGSTIATTSPVLESGKSEQGMFQALIAAIVKTTGGELSELNDDTELADIGVDSIMAIEIVAHVKDATNQDLPLSFVLEYPTIGNLRCAFDEDVSSEFTDSEVTSGTPNSSESVTSEEELPGPEEHAFKEPKDDSPLARRDMDNSNDRSLDGGVLDDGSPQPRVRISLLQGRPVRGKPKFFLIADGSGSIATYIHLPPAKVKMPIYGVDSPFLHCPSRFTPEAGIPAAAKWIVEALMKAQPEGPFFLGGFSGGAMLSYEVARQLAAFDRKVDSMVLIDMCCPRPAVSSDLKESLWNDDIESFEEIASHVGSNVASNMQQHLRAIFKAVSVYHPPSMTAKERPDRTIIIWAKKGMITRCHDVPEIMERLSARGLTRTIPEGFMEDPSFGAIRWSFVSKGANDLGPNGWQKYIGHEPLCLSVDLDHLEMMEPGQVHIFRGAFEEAFRLIEA.

The tract at residues 9 to 242 is N-terminal acylcarrier protein transacylase domain (SAT); it reads LLFGDYTEPW…EKLNIHALQH (234 aa). The Ketosynthase family 3 (KS3) domain maps to 363-793; sequence SGRIAIVGMS…GGNGCLLLEE (431 aa). Catalysis depends on for beta-ketoacyl synthase activity residues Cys538, His673, and His712. The interval 898 to 1198 is malonyl-CoA:ACP transacylase (MAT) domain; the sequence is TFTGQGSQYA…KIMSTLDATG (301 aa). Catalysis depends on Ser987, which acts as the For acyl/malonyl transferase activity. The product template (PT) domain stretch occupies residues 1276–1590; sequence STCAQYVITE…QNVILERLLG (315 aa). Residues 1279-1420 are N-terminal hotdog fold; sequence AQYVITETKT…AGLESQWEKS (142 aa). The PKS/mFAS DH domain maps to 1279–1586; it reads AQYVITETKT…FHRVQNVILE (308 aa). The active-site Proton acceptor; for dehydratase activity is His1311. The C-terminal hotdog fold stretch occupies residues 1439–1586; it reads QGHRIQRDIY…FHRVQNVILE (148 aa). The Proton donor; for dehydratase activity role is filled by Asp1500. A disordered region spans residues 1594–1637; it reads SSSVPAQASDPLRSKRSPQEARSLPGEAKTEKPGSTIATTSPVL. A Carrier domain is found at 1641–1718; the sequence is KSEQGMFQAL…NLRCAFDEDV (78 aa). Ser1678 is subject to O-(pantetheine 4'-phosphoryl)serine. The segment covering 1721–1738 has biased composition (polar residues); the sequence is EFTDSEVTSGTPNSSESV. Residues 1721–1786 are disordered; sequence EFTDSEVTSG…GVLDDGSPQP (66 aa). Residues 1747–1774 show a composition bias toward basic and acidic residues; it reads PEEHAFKEPKDDSPLARRDMDNSNDRSL. The tract at residues 1805-1950 is thioesterase (TE) domain; sequence FLIADGSGSI…MQQHLRAIFK (146 aa). The active-site For thioesterase activity is His2058.

Its pathway is secondary metabolite biosynthesis. Its function is as follows. Highly reducing polyketide synthase; part of the gene cluster that mediates the biosynthesis of cladosporin, a tricyclic octaketide that acts as an antimalarial agent though inhibition of the Plasmodium falciparum lysyl-tRNA synthetase. The highly reducing polyketide synthase cla2 is responsible for biosynthesis up to the pentaketide stage, including of the tetrahydropyran (THP) ring, whereas the three subsequent ketide extensions with no reduction are catalyzed by the non-reducing polyketide synthase cla3. This chain is Non-reducing polyketide synthase cla3, found in Cladosporium cladosporioides.